Consider the following 298-residue polypeptide: WRKY transcription factor 22 (298 aa).

Disordered stretches follow at residues 75 to 116 (EEPR…IQHK) and 181 to 220 (AEHN…TYSS). Residues 88 to 103 (SLSASSGSVTSKPSGS) show a composition bias toward low complexity. Positions 107–116 (RSKRRKIQHK) are enriched in basic residues. A DNA-binding region (WRKY) is located at residues 122-188 (AAEALNSDVW…YTAEHNHPAP (67 aa)). Positions 190 to 220 (HRNSLAGSTRQKPSDQQTSKSPTTTIATYSS) are enriched in polar residues.

This sequence belongs to the WRKY group II-e family.

It localises to the nucleus. In terms of biological role, transcription factor involved in the expression of defense genes in innate immune response of plants. Interacts specifically with the W box (5'-(T)TGAC[CT]-3'), a frequently occurring elicitor-responsive cis-acting element. Activates WRKY 29, SIRK and its own promoters. In Arabidopsis thaliana (Mouse-ear cress), this protein is WRKY transcription factor 22 (WRKY22).